A 73-amino-acid chain; its full sequence is Translation initiation factor IF-1 (73 aa).

Positions 1–73 (MAKKDGVIEI…TRGRIVYRYK (73 aa)) constitute an S1-like domain.

The protein belongs to the IF-1 family. In terms of assembly, component of the 30S ribosomal translation pre-initiation complex which assembles on the 30S ribosome in the order IF-2 and IF-3, IF-1 and N-formylmethionyl-tRNA(fMet); mRNA recruitment can occur at any time during PIC assembly.

Its subcellular location is the cytoplasm. Functionally, one of the essential components for the initiation of protein synthesis. Stabilizes the binding of IF-2 and IF-3 on the 30S subunit to which N-formylmethionyl-tRNA(fMet) subsequently binds. Helps modulate mRNA selection, yielding the 30S pre-initiation complex (PIC). Upon addition of the 50S ribosomal subunit IF-1, IF-2 and IF-3 are released leaving the mature 70S translation initiation complex. The protein is Translation initiation factor IF-1 of Leifsonia xyli subsp. xyli (strain CTCB07).